The chain runs to 337 residues: DNA-directed RNA polymerase subunit alpha (337 aa).

The alpha N-terminal domain (alpha-NTD) stretch occupies residues 1-233; the sequence is MIREKVTVST…DLFIPFLHME (233 aa). Positions 266–337 are alpha C-terminal domain (alpha-CTD); that stretch reads KLALKSIFID…FAIDLPKNQF (72 aa).

The protein belongs to the RNA polymerase alpha chain family. In plastids the minimal PEP RNA polymerase catalytic core is composed of four subunits: alpha, beta, beta', and beta''. When a (nuclear-encoded) sigma factor is associated with the core the holoenzyme is formed, which can initiate transcription.

It is found in the plastid. The protein localises to the chloroplast. It carries out the reaction RNA(n) + a ribonucleoside 5'-triphosphate = RNA(n+1) + diphosphate. DNA-dependent RNA polymerase catalyzes the transcription of DNA into RNA using the four ribonucleoside triphosphates as substrates. The chain is DNA-directed RNA polymerase subunit alpha from Ipomoea purpurea (Common morning glory).